A 296-amino-acid chain; its full sequence is Glycine--tRNA ligase alpha subunit (296 aa).

It belongs to the class-II aminoacyl-tRNA synthetase family. In terms of assembly, tetramer of two alpha and two beta subunits.

The protein localises to the cytoplasm. The enzyme catalyses tRNA(Gly) + glycine + ATP = glycyl-tRNA(Gly) + AMP + diphosphate. This Listeria monocytogenes serotype 4a (strain HCC23) protein is Glycine--tRNA ligase alpha subunit.